We begin with the raw amino-acid sequence, 210 residues long: MKPTSVIIMDTHPIIRMSIEVLLQKNSELQIVLKTDDYRITIDYLRTRPVDLIIMDIDLPGTDGFTFLKRIKQIQSTVKVLFLSSKSECFYAGRAIQAGANGFVSKCNDQNDIFHAVQMILSGYTFFPSETLNYIKSNKCSTNSSTVTVLSNREVTILRYLVSGLSNKEIADKLLLSNKTVSAHKSNIYGKLGLHSIVELIDYAKLYELI.

Positions 5-121 (SVIIMDTHPI…DIFHAVQMIL (117 aa)) constitute a Response regulatory domain. The residue at position 56 (D56) is a 4-aspartylphosphate. An HTH luxR-type domain is found at 143–208 (NSSTVTVLSN…ELIDYAKLYE (66 aa)). The H-T-H motif DNA-binding region spans 167-186 (NKEIADKLLLSNKTVSAHKS).

It localises to the cytoplasm. In Escherichia coli O157:H7, this protein is Fimbriae Z protein (fimZ).